A 497-amino-acid chain; its full sequence is Probable malate:quinone oxidoreductase (497 aa).

This sequence belongs to the MQO family. The cofactor is FAD.

The catalysed reaction is (S)-malate + a quinone = a quinol + oxaloacetate. The protein operates within carbohydrate metabolism; tricarboxylic acid cycle; oxaloacetate from (S)-malate (quinone route): step 1/1. The polypeptide is Probable malate:quinone oxidoreductase (Hahella chejuensis (strain KCTC 2396)).